The following is a 380-amino-acid chain: Chaperone protein DnaJ (380 aa).

The 68-residue stretch at 5-72 folds into the J domain; that stretch reads DYYETLGVAK…QKRAAYDQYG (68 aa). The segment at 140–218 adopts a CR-type zinc-finger fold; sequence GKDTQIRIPS…CNGAGRIKSN (79 aa). Residues C153, C156, C170, C173, C192, C195, C206, and C209 each contribute to the Zn(2+) site. CXXCXGXG motif repeat units follow at residues 153-160, 170-177, 192-199, and 206-213; these read CSTCDGTG, CPTCSGSG, CPSCHGTG, and CTACNGAG. A disordered region spans residues 357–380; that stretch reads LKKGGERHSPNAKSWTDRVKDLFK.

Belongs to the DnaJ family. As to quaternary structure, homodimer. Requires Zn(2+) as cofactor.

The protein localises to the cytoplasm. In terms of biological role, participates actively in the response to hyperosmotic and heat shock by preventing the aggregation of stress-denatured proteins and by disaggregating proteins, also in an autonomous, DnaK-independent fashion. Unfolded proteins bind initially to DnaJ; upon interaction with the DnaJ-bound protein, DnaK hydrolyzes its bound ATP, resulting in the formation of a stable complex. GrpE releases ADP from DnaK; ATP binding to DnaK triggers the release of the substrate protein, thus completing the reaction cycle. Several rounds of ATP-dependent interactions between DnaJ, DnaK and GrpE are required for fully efficient folding. Also involved, together with DnaK and GrpE, in the DNA replication of plasmids through activation of initiation proteins. The sequence is that of Chaperone protein DnaJ from Methylibium petroleiphilum (strain ATCC BAA-1232 / LMG 22953 / PM1).